The chain runs to 402 residues: Endo-polygalacturonase (402 aa).

Residues 1–23 (MEYQSGKRVLSLSLGLIGLFSAS) form the signal peptide. 2 cysteine pairs are disulfide-bonded: Cys41/Cys62 and Cys115/Cys125. Asp249 acts as the Proton donor in catalysis. Residue His277 is part of the active site.

It belongs to the glycosyl hydrolase 28 family. Monomer.

Its subcellular location is the secreted. It catalyses the reaction (1,4-alpha-D-galacturonosyl)n+m + H2O = (1,4-alpha-D-galacturonosyl)n + (1,4-alpha-D-galacturonosyl)m.. Functionally, involved in maceration and soft-rotting of plant tissue. This Pectobacterium parmentieri protein is Endo-polygalacturonase (pehA).